A 101-amino-acid polypeptide reads, in one-letter code: Co-chaperonin GroES (101 aa).

The protein belongs to the GroES chaperonin family. As to quaternary structure, heptamer of 7 subunits arranged in a ring. Interacts with the chaperonin GroEL.

Its subcellular location is the cytoplasm. Together with the chaperonin GroEL, plays an essential role in assisting protein folding. The GroEL-GroES system forms a nano-cage that allows encapsulation of the non-native substrate proteins and provides a physical environment optimized to promote and accelerate protein folding. GroES binds to the apical surface of the GroEL ring, thereby capping the opening of the GroEL channel. The protein is Co-chaperonin GroES of Thermus thermophilus (strain ATCC BAA-163 / DSM 7039 / HB27).